We begin with the raw amino-acid sequence, 255 residues long: Acetylglutamate kinase (255 aa).

Residues 40 to 41 (GG), Arg62, and Asn153 contribute to the substrate site.

It belongs to the acetylglutamate kinase family. ArgB subfamily.

The protein resides in the cytoplasm. The enzyme catalyses N-acetyl-L-glutamate + ATP = N-acetyl-L-glutamyl 5-phosphate + ADP. The protein operates within amino-acid biosynthesis; L-arginine biosynthesis; N(2)-acetyl-L-ornithine from L-glutamate: step 2/4. Functionally, catalyzes the ATP-dependent phosphorylation of N-acetyl-L-glutamate. The chain is Acetylglutamate kinase from Bacillus cereus (strain B4264).